The sequence spans 249 residues: 1-(5-phosphoribosyl)-5-[(5-phosphoribosylamino)methylideneamino] imidazole-4-carboxamide isomerase (249 aa).

Catalysis depends on Asp-11, which acts as the Proton acceptor. Residue Asp-133 is the Proton donor of the active site.

This sequence belongs to the HisA/HisF family.

Its subcellular location is the cytoplasm. It carries out the reaction 1-(5-phospho-beta-D-ribosyl)-5-[(5-phospho-beta-D-ribosylamino)methylideneamino]imidazole-4-carboxamide = 5-[(5-phospho-1-deoxy-D-ribulos-1-ylimino)methylamino]-1-(5-phospho-beta-D-ribosyl)imidazole-4-carboxamide. It functions in the pathway amino-acid biosynthesis; L-histidine biosynthesis; L-histidine from 5-phospho-alpha-D-ribose 1-diphosphate: step 4/9. This chain is 1-(5-phosphoribosyl)-5-[(5-phosphoribosylamino)methylideneamino] imidazole-4-carboxamide isomerase, found in Haemophilus influenzae (strain 86-028NP).